The chain runs to 282 residues: High mobility group nucleosome-binding domain-containing protein 5 (282 aa).

A disordered region spans residues 1-282 (MPKRKAAGQG…GKKEEPQSIV (282 aa)). Threonine 31 is subject to Phosphothreonine. The span at 37-46 (KRTSSSRKMK) shows a compositional bias: basic residues. A Glycyl lysine isopeptide (Lys-Gly) (interchain with G-Cter in SUMO2) cross-link involves residue lysine 67. Tyrosine 76 carries the phosphotyrosine modification. Residues 81 to 119 (KNGEAKITEAPASEKEIVEVKEENIEDATEKGGEKKEAV) show a composition bias toward basic and acidic residues. A Phosphoserine modification is found at serine 93. Lysine 101 participates in a covalent cross-link: Glycyl lysine isopeptide (Lys-Gly) (interchain with G-Cter in SUMO1); alternate. Lysine 101 participates in a covalent cross-link: Glycyl lysine isopeptide (Lys-Gly) (interchain with G-Cter in SUMO2); alternate. Lysine 124 is covalently cross-linked (Glycyl lysine isopeptide (Lys-Gly) (interchain with G-Cter in SUMO2)). The span at 125-138 (NEEEDQKEDEEDQN) shows a compositional bias: acidic residues. Basic and acidic residues-rich tracts occupy residues 139–152 (EEKG…KDEK) and 158–256 (KEDK…KEDL). Over residues 257–270 (KEEEEGKEEDEIKE) the composition is skewed to acidic residues. The segment covering 271-282 (DDGKKEEPQSIV) has biased composition (basic and acidic residues).

This sequence belongs to the HMGN family. Ubiquitously expressed.

The protein localises to the nucleus. In terms of biological role, preferentially binds to euchromatin and modulates cellular transcription by counteracting linker histone-mediated chromatin compaction. This Homo sapiens (Human) protein is High mobility group nucleosome-binding domain-containing protein 5 (HMGN5).